The primary structure comprises 365 residues: MKQVHFFILWFFVLNLYSIKAQAGCRTPNGENARCVPINNCKILYDSVLTSDPEVIRFLRASQCGYNGQPLVCCGSSASYQPPPTSASIRNRRPELLPNDCGYQVEADKILNGDDTVPEEFPWTAMIGYKNSSNFEQFACGGSLINNRYIVTAAHCVAGRVLRVVGALNKVRLGEWNTATDPDCYGAVRVCVPDKPIDLGIEETIQHPDYVDGSKDRYHDIALIRLNRQVEFTNYIRPVCLPQPNEEVQVGQRLTVVGWGRTETGQYSTIKQKLAVPVVHAEQCAKTFGAAGVRVRSSQLCAGGEKAKDSCGGDSGGPLLAERANQQFFLEGLVSFGATCGTEGWPGIYTKVGKYRDWIEGNIRP.

Residues 1–23 form the signal peptide; sequence MKQVHFFILWFFVLNLYSIKAQA. The region spanning 24-74 is the Clip domain; it reads GCRTPNGENARCVPINNCKILYDSVLTSDPEVIRFLRASQCGYNGQPLVCC. 8 cysteine pairs are disulfide-bonded: Cys25–Cys73, Cys35–Cys64, Cys41–Cys74, Cys101–Cys240, Cys140–Cys156, Cys184–Cys191, Cys284–Cys301, and Cys311–Cys340. The Peptidase S1 domain maps to 110–364; that stretch reads ILNGDDTVPE…YRDWIEGNIR (255 aa). Asn131 is a glycosylation site (N-linked (GlcNAc...) asparagine). Residue His155 is the Charge relay system of the active site. Residues Glu175, Asn177, Thr180, and Asp183 each contribute to the Ca(2+) site. Residue Asp220 is the Charge relay system of the active site. Ser315 (charge relay system) is an active-site residue.

Belongs to the peptidase S1 family. CLIP subfamily. As to quaternary structure, in the active form, heterodimer of a light chain and a heavy chain; disulfide-linked. In terms of processing, cleaved following the recognition of pathogen-derived products, probably by a lysyl endopeptidase.

It localises to the secreted. With respect to regulation, protein stability and endopeptidase activity are calcium dependent. First cleavage on prophenoloxidase PPO1 and PPO2 is not dependent on calcium; however, cleavage of PPO1 and PPO2 to their active forms is dependent on calcium and on the presence of PPAF2 and PPAF3. Cleavage of PPAF2 is inhibited by calcium. Inhibited by ethylenediaminetetraacetic acid (EDTA), p-nitrophenyl-p'-guanido-benzoate, diisopropylphosphorofluoridate (iPr2PF) and p-(Amidinophenyl)methanesulfonyl fluoride (p-APMSF). Serine endopeptidase which, by cleaving prophenoloxidase PPO1 and PPO2, is required for the activation of the prophenoloxidase cascade probably following the recognition of pathogen-derived products. The protein is Phenoloxidase-activating factor 1 of Holotrichia diomphalia (Korean black chafer).